A 242-amino-acid chain; its full sequence is Probable transcriptional regulatory protein XAC3151 (242 aa).

It belongs to the TACO1 family.

The protein resides in the cytoplasm. In Xanthomonas axonopodis pv. citri (strain 306), this protein is Probable transcriptional regulatory protein XAC3151.